We begin with the raw amino-acid sequence, 114 residues long: Fumarate reductase subunit D (114 aa).

The next 3 helical transmembrane spans lie at 27 to 47 (ICFP…LVPV), 50 to 70 (IVAF…TIFP), and 94 to 114 (WVFY…VIAL).

This sequence belongs to the FrdD family. As to quaternary structure, part of an enzyme complex containing four subunits: a flavoprotein (FrdA), an iron-sulfur protein (FrdB), and two hydrophobic anchor proteins (FrdC and FrdD).

The protein resides in the cell inner membrane. In terms of biological role, anchors the catalytic components of the fumarate reductase complex to the cell membrane, binds quinones. In Actinobacillus pleuropneumoniae serotype 3 (strain JL03), this protein is Fumarate reductase subunit D.